A 143-amino-acid polypeptide reads, in one-letter code: Large ribosomal subunit protein uL11 (143 aa).

This sequence belongs to the universal ribosomal protein uL11 family. Part of the ribosomal stalk of the 50S ribosomal subunit. Interacts with L10 and the large rRNA to form the base of the stalk. L10 forms an elongated spine to which L12 dimers bind in a sequential fashion forming a multimeric L10(L12)X complex. Post-translationally, one or more lysine residues are methylated.

Its function is as follows. Forms part of the ribosomal stalk which helps the ribosome interact with GTP-bound translation factors. The chain is Large ribosomal subunit protein uL11 from Azotobacter vinelandii (strain DJ / ATCC BAA-1303).